We begin with the raw amino-acid sequence, 578 residues long: Protein SIA1 (578 aa).

The N-terminal stretch at 1 to 28 is a signal peptide; that stretch reads MFRNRRILLYARRFFLVWICFLFITSWS.

In terms of biological role, may be involved in the activation of the plasma membrane proton-ATPase by glucose. The protein is Protein SIA1 (SIA1) of Kluyveromyces lactis (strain ATCC 8585 / CBS 2359 / DSM 70799 / NBRC 1267 / NRRL Y-1140 / WM37) (Yeast).